The chain runs to 335 residues: Beta-ketoacyl-[acyl-carrier-protein] synthase III (335 aa).

Residues C118 and H259 contribute to the active site. The segment at 260–264 (QANER) is ACP-binding. The active site involves N289.

Belongs to the thiolase-like superfamily. FabH family. In terms of assembly, homodimer.

Its subcellular location is the cytoplasm. It carries out the reaction malonyl-[ACP] + acetyl-CoA + H(+) = 3-oxobutanoyl-[ACP] + CO2 + CoA. It functions in the pathway lipid metabolism; fatty acid biosynthesis. Functionally, catalyzes the condensation reaction of fatty acid synthesis by the addition to an acyl acceptor of two carbons from malonyl-ACP. Catalyzes the first condensation reaction which initiates fatty acid synthesis and may therefore play a role in governing the total rate of fatty acid production. Possesses both acetoacetyl-ACP synthase and acetyl transacylase activities. Its substrate specificity determines the biosynthesis of branched-chain and/or straight-chain of fatty acids. The sequence is that of Beta-ketoacyl-[acyl-carrier-protein] synthase III from Chlamydia caviae (strain ATCC VR-813 / DSM 19441 / 03DC25 / GPIC) (Chlamydophila caviae).